The chain runs to 405 residues: Glucose-1-phosphate adenylyltransferase (405 aa).

Residues G164, 179–180 (EK), and S197 contribute to the alpha-D-glucose 1-phosphate site.

This sequence belongs to the bacterial/plant glucose-1-phosphate adenylyltransferase family. As to quaternary structure, homotetramer.

The catalysed reaction is alpha-D-glucose 1-phosphate + ATP + H(+) = ADP-alpha-D-glucose + diphosphate. It functions in the pathway glycan biosynthesis; glycogen biosynthesis. Involved in the biosynthesis of ADP-glucose, a building block required for the elongation reactions to produce glycogen. Catalyzes the reaction between ATP and alpha-D-glucose 1-phosphate (G1P) to produce pyrophosphate and ADP-Glc. The protein is Glucose-1-phosphate adenylyltransferase of Corynebacterium jeikeium (strain K411).